The following is a 180-amino-acid chain: Centromere protein M (180 aa).

In terms of assembly, component of the CENPA-NAC complex, at least composed of CENPA, CENPC, CENPH, CENPM, CENPN, CENPT and CENPU. The CENPA-NAC complex interacts with the CENPA-CAD complex, composed of CENPI, CENPK, CENPL, CENPO, CENPP, CENPQ, CENPR and CENPS.

Its subcellular location is the nucleus. It localises to the cytoplasm. It is found in the chromosome. The protein resides in the centromere. The protein localises to the kinetochore. In terms of biological role, component of the CENPA-NAC (nucleosome-associated) complex, a complex that plays a central role in assembly of kinetochore proteins, mitotic progression and chromosome segregation. The CENPA-NAC complex recruits the CENPA-CAD (nucleosome distal) complex and may be involved in incorporation of newly synthesized CENPA into centromeres. This Bos taurus (Bovine) protein is Centromere protein M (CENPM).